The sequence spans 1196 residues: Phosphoglucan, water dikinase, chloroplastic (1196 aa).

The N-terminal 54 residues, 1–54 (MESIGSHCCSSPFTFITRNSSSSLPRLVNITHRVNLSHQSHRLRNSNSRLTCTA), are a transit peptide targeting the chloroplast. Position 55 is an N-acetylthreonine (threonine 55). The 101-residue stretch at 66-166 (KKDGSGTKVR…NFSVVCHWDA (101 aa)) folds into the CBM20 domain. Positions 174–200 (PQEVGNDDDVGDGGHERDNHDVGDDRV) are disordered. The segment covering 185-200 (DGGHERDNHDVGDDRV) has biased composition (basic and acidic residues). Histidine 759 serves as the catalytic Tele-phosphohistidine intermediate. Residues 804–855 (LSTEGRSRTSKSSATKKTDKNSLSKKKTDKKSLSIDDEESKPGSSSSNSLLY) form a disordered region.

The protein belongs to the PEP-utilizing enzyme family. As to quaternary structure, homodimer. Mg(2+) is required as a cofactor. In all starch containing tissues (e.g. roots, leaves, stems, inflorescence and siliques).

The protein resides in the plastid. Its subcellular location is the chloroplast. It carries out the reaction [(1-&gt;4)-6-phospho-alpha-D-glucosyl](n) + n ATP + n H2O = [(1-&gt;4)-3,6-bisphospho-alpha-D-glucosyl](n) + n AMP + n phosphate + 2n H(+). Its function is as follows. Mediates the incorporation of phosphate into starch-like phospho-alpha-glucan, mostly at the C-3 position of glucose units. Required for starch degradation, suggesting that the phosphate content of starch regulates its degradability. This Arabidopsis thaliana (Mouse-ear cress) protein is Phosphoglucan, water dikinase, chloroplastic (GWD3).